The sequence spans 230 residues: Large ribosomal subunit protein uL1 (230 aa).

It belongs to the universal ribosomal protein uL1 family. In terms of assembly, part of the 50S ribosomal subunit.

Its function is as follows. Binds directly to 23S rRNA. The L1 stalk is quite mobile in the ribosome, and is involved in E site tRNA release. In terms of biological role, protein L1 is also a translational repressor protein, it controls the translation of the L11 operon by binding to its mRNA. The polypeptide is Large ribosomal subunit protein uL1 (Bacillus mycoides (strain KBAB4) (Bacillus weihenstephanensis)).